Here is a 231-residue protein sequence, read N- to C-terminus: Orotidine 5'-phosphate decarboxylase (231 aa).

Residues Asp-11, Lys-33, 60–69 (DLKFHDIPNT), Thr-119, Arg-180, Gln-189, Gly-209, and Arg-210 contribute to the substrate site. The active-site Proton donor is the Lys-62.

The protein belongs to the OMP decarboxylase family. Type 1 subfamily. In terms of assembly, homodimer.

The enzyme catalyses orotidine 5'-phosphate + H(+) = UMP + CO2. The protein operates within pyrimidine metabolism; UMP biosynthesis via de novo pathway; UMP from orotate: step 2/2. In terms of biological role, catalyzes the decarboxylation of orotidine 5'-monophosphate (OMP) to uridine 5'-monophosphate (UMP). The chain is Orotidine 5'-phosphate decarboxylase from Idiomarina loihiensis (strain ATCC BAA-735 / DSM 15497 / L2-TR).